Here is a 480-residue protein sequence, read N- to C-terminus: Zinc finger protein ztf-16 (480 aa).

The C2H2-type 1 zinc-finger motif lies at 5-27 (NACTECGFTTTVFSEFQGHIEKH). Residues 25–75 (EKHENEHSRSSSGEMSNSQTIEWGDGIQSSTPSPRSTPPSDPTPSPDSDEH) are disordered. Residues 34–45 (SSSGEMSNSQTI) show a composition bias toward polar residues. Over residues 59-69 (RSTPPSDPTPS) the composition is skewed to pro residues. 5 C2H2-type zinc fingers span residues 103 to 125 (HVCP…LEAH), 133 to 155 (YQCD…RMRH), 161 to 183 (YECR…SMTH), 190 to 215 (FDCP…EETH), and 223 to 246 (ASCK…QTRH). Disordered regions lie at residues 243–275 (QTRH…MDPA), 290–311 (EFSP…DKIP), and 376–417 (TSSS…KEDE). The span at 244-259 (TRHDDSESSPKKENTP) shows a compositional bias: basic and acidic residues. Composition is skewed to low complexity over residues 292 to 305 (SPPN…STSS) and 376 to 403 (TSSS…SLSL). The segment covering 404 to 413 (TEKEKSPTPE) has biased composition (basic and acidic residues). C2H2-type zinc fingers lie at residues 420 to 442 (VECC…KSLH) and 448 to 472 (FKCA…FADH).

Belongs to the Ikaros C2H2-type zinc-finger protein family. As to expression, expressed in the somatic gonad, hypodermis and cells in the head and tail. Expressed in amphid and phasmid sheath glia, amphid and phasmid socket glia, and in neurons in the head.

Its subcellular location is the nucleus. In terms of biological role, positively regulates the expression of ver-1 in the amphid sheath glia of amphid sensory neurons. Together with ehn-3, plays a role in somatic gonad development and is required for proper gonadal primordium assembly and somatic gonad precursor cell morphology. This is Zinc finger protein ztf-16 from Caenorhabditis elegans.